We begin with the raw amino-acid sequence, 279 residues long: UTP--glucose-1-phosphate uridylyltransferase (279 aa).

The protein belongs to the UDPGP type 2 family.

The enzyme catalyses alpha-D-glucose 1-phosphate + UTP + H(+) = UDP-alpha-D-glucose + diphosphate. May play a role in stationary phase survival. In Pseudomonas aeruginosa (strain ATCC 15692 / DSM 22644 / CIP 104116 / JCM 14847 / LMG 12228 / 1C / PRS 101 / PAO1), this protein is UTP--glucose-1-phosphate uridylyltransferase (galU).